The following is a 164-amino-acid chain: Replication restart protein DnaT (164 aa).

This sequence belongs to the DnaT family. In terms of assembly, homooligomerizes. Interacts with PriB. Component of the replication restart primosome. Primosome assembly occurs via a 'hand-off' mechanism. PriA binds to replication forks, subsequently PriB then DnaT bind; DnaT then displaces ssDNA to generate the helicase loading substrate.

Involved in the restart of stalled replication forks, which reloads the replicative helicase on sites other than the origin of replication. Can function in multiple replication restart pathways. Displaces ssDNA from a PriB-ssDNA complex. Probably forms a spiral filament on ssDNA. This is Replication restart protein DnaT from Buchnera aphidicola subsp. Acyrthosiphon pisum (strain 5A).